The sequence spans 595 residues: Cardiolipin synthase (CMP-forming) / mitochondrial hydrolase fusion protein (595 aa).

A mitochondrion-targeting transit peptide spans 1-24; it reads MLHTINYRSWHLAARQLGRSTFRK. 2 consecutive transmembrane segments (helical) span residues 538–560 and 564–586; these read ALQLLLLGLLITEPILPFDASFA and LFYIVGCTTIASGASYCISRNTF.

In the N-terminal section; belongs to the HAD-like hydrolase superfamily. This sequence in the C-terminal section; belongs to the CDP-alcohol phosphatidyltransferase class-I family. Mg(2+) is required as a cofactor. In terms of processing, proteolytically cleaved, presumably during its import into the mitochondrion by mitochondrial processing peptidase.

The protein resides in the mitochondrion. It localises to the mitochondrion inner membrane. The catalysed reaction is a CDP-1,2-diacyl-sn-glycerol + a 1,2-diacyl-sn-glycero-3-phospho-(1'-sn-glycerol) = a cardiolipin + CMP + H(+). Functionally, catalyzes the synthesis of cardiolipin (CL) (diphosphatidylglycerol) by specifically transferring a phosphatidyl group from CDP-diacylglycerol to phosphatidylglycerol (PG). CL is a key phospholipid in mitochondrial membranes and plays important roles in maintaining the functional integrity and dynamics of mitochondria under both optimal and stress conditions. Activity is dispensable for viability. In Schizosaccharomyces pombe (strain 972 / ATCC 24843) (Fission yeast), this protein is Cardiolipin synthase (CMP-forming) / mitochondrial hydrolase fusion protein.